The chain runs to 101 residues: Small ribosomal subunit protein uS14 (101 aa).

This sequence belongs to the universal ribosomal protein uS14 family. As to quaternary structure, part of the 30S ribosomal subunit. Contacts proteins S3 and S10.

In terms of biological role, binds 16S rRNA, required for the assembly of 30S particles and may also be responsible for determining the conformation of the 16S rRNA at the A site. The polypeptide is Small ribosomal subunit protein uS14 (Anaplasma phagocytophilum (strain HZ)).